Here is a 1843-residue protein sequence, read N- to C-terminus: Xin actin-binding repeat-containing protein 1 (1843 aa).

The segment covering 1–10 (MADTQTQVAP) has biased composition (polar residues). Residues 1 to 48 (MADTQTQVAPTPTMRMATAEDLPLPPPPALEDLPLPPPKESFSKFHQQ) form a disordered region. Residues 1–54 (MADTQTQVAPTPTMRMATAEDLPLPPPPALEDLPLPPPKESFSKFHQQRQASEL) form an interaction with VASP region. Positions 23 to 39 (PLPPPPALEDLPLPPPK) are enriched in pro residues. 4 Xin repeats span residues 89 to 104 (GDVQCMRWIFENWRLD), 121 to 136 (GDVQATSRKFEEGSFA), 151 to 166 (GDVRAARWLFETKPLD), and 186 to 201 (GDVQGTRMLFETRPLD). The disordered stretch occupies residues 132-151 (EGSFANSTDQEPTRPQPGGG). Residues Ser-205, Ser-208, and Ser-213 each carry the phosphoserine modification. Xin repeat units lie at residues 226 to 241 (GDVKKTVKLFQTEPLC) and 264 to 279 (NAVRSARWLFETRPLD). Ser-295 bears the Phosphoserine mark. The stretch at 302-317 (PDVSATRWIFETQPLD) is one Xin 7 repeat. Ser-332 is subject to Phosphoserine. 2 Xin repeats span residues 340–355 (PDVQQQQHLFETRALD) and 376–391 (GDVRSTLWLFETKPLD). The tract at residues 406 to 432 (DPQDGEGHLSSDSSSALPFSQSAPQRD) is disordered. A compositionally biased stretch (low complexity) spans 415-429 (SSDSSSALPFSQSAP). A Xin 10 repeat occupies 436–451 (GDVKTFKNLFETLPLD). A disordered region spans residues 455-479 (QGEVLAHGSPSREEGTDSAGQAQGI). Xin repeat units follow at residues 507–522 (GDVQGYRWMFETQPLD) and 545–560 (GDVGTARWLFETQPLE). An interaction with CTNNB1 region spans residues 531 to 632 (IDVVRGITRQ…AQSCTWMFKP (102 aa)). A compositionally biased stretch (basic and acidic residues) spans 564–577 (QREQQERQKEEGKS). A disordered region spans residues 564–591 (QREQQERQKEEGKSQGDPQPEAPPKGDV). Xin repeat units follow at residues 589–604 (GDVQTIRWLFETCPMS), 621–636 (AEAQSCTWMFKPQPVD), 654–669 (GERQTDRHVFETEPLQ), 691–706 (GQVSRQKEVFQALEAG), and 723–738 (GSVHKFTWLFENCPMG). Disordered regions lie at residues 943 to 999 (SLRW…QAIG), 1063 to 1205 (AEAQ…MAWG), 1238 to 1277 (SGPQAAGASPHPHNAFVPPPPTLPAAVTGPDFPAGAHRAE), 1289 to 1471 (DPLL…QKEL), and 1561 to 1696 (MSSL…DVSV). Polar residues-rich tracts occupy residues 1064 to 1073 (EAQSLHQQVL) and 1080 to 1089 (PTPTATSNPI). Over residues 1294 to 1311 (SHSSPAGQRTPGGSQTKT) the composition is skewed to polar residues. Basic and acidic residues predominate over residues 1357-1368 (GQREHQRGERDT). The segment covering 1393–1424 (GHSQPSLQHGLSTTAPRPTKNQATGSNAQSSE) has biased composition (polar residues). The stretch at 1462 to 1490 (DSLQRNQKELQGLLNQVQALEKEAASSVD) forms a coiled coil. Polar residues-rich tracts occupy residues 1588 to 1600 (VTVSSSARPSGSG) and 1663 to 1679 (SRDSPSSPTFISIQSAT). The interval 1685 to 1843 (TPSFKGNPDV…SCSYSQPAAQ (159 aa)) is interaction with FLNC.

It belongs to the Xin family. As to quaternary structure, interacts (via N-terminus) with CTTN; the interaction promotes CTTN localization to intercalated disks in cardiomyocytes. Interacts with CTNNB1. Interacts with FLNC and VASP. Interacts with F-actin. Expressed in skeletal muscle at areas of Z-disk disruption in a longitudinal pattern spanning one or more sarcomeres (at protein level). As to expression, expressed in the heart (at protein level). In terms of tissue distribution, expressed in the heart.

The protein localises to the cell junction. The protein resides in the adherens junction. It is found in the desmosome. Its function is as follows. Protects actin filaments from depolymerization. Required for correct cardiac intercalated disk ultrastructure via maintenance of cell-cell adhesion stability, and as a result maintains cardiac organ morphology, conductance and heart beat rhythm. Required for development of normal skeletal muscle morphology and muscle fiber type composition. Plays a role in regulating muscle satellite cell activation and survival, as a result promotes muscle fiber recovery from injury and fatigue. In Homo sapiens (Human), this protein is Xin actin-binding repeat-containing protein 1.